The sequence spans 673 residues: UvrABC system protein B (673 aa).

The Helicase ATP-binding domain occupies 26–183; that stretch reads EGLEDGLAHQ…RRLAELQYAR (158 aa). 39 to 46 serves as a coordination point for ATP; sequence GVTGSGKT. The Beta-hairpin signature appears at 92-115; it reads YYDYYQPEAYVPSSDTFIEKDASV. The Helicase C-terminal domain occupies 431–597; it reads QVDDLLSEIR…GLNKKVVDIL (167 aa). The interval 608-627 is disordered; it reads AKGRGKSRPIVEPDNVPMDM. The 36-residue stretch at 633–668 folds into the UVR domain; sequence QQKIHELEGLMMQHAQNLEFEEAAQIRDQLHQLRDL.

It belongs to the UvrB family. Forms a heterotetramer with UvrA during the search for lesions. Interacts with UvrC in an incision complex.

The protein localises to the cytoplasm. In terms of biological role, the UvrABC repair system catalyzes the recognition and processing of DNA lesions. A damage recognition complex composed of 2 UvrA and 2 UvrB subunits scans DNA for abnormalities. Upon binding of the UvrA(2)B(2) complex to a putative damaged site, the DNA wraps around one UvrB monomer. DNA wrap is dependent on ATP binding by UvrB and probably causes local melting of the DNA helix, facilitating insertion of UvrB beta-hairpin between the DNA strands. Then UvrB probes one DNA strand for the presence of a lesion. If a lesion is found the UvrA subunits dissociate and the UvrB-DNA preincision complex is formed. This complex is subsequently bound by UvrC and the second UvrB is released. If no lesion is found, the DNA wraps around the other UvrB subunit that will check the other stand for damage. The sequence is that of UvrABC system protein B from Escherichia coli O7:K1 (strain IAI39 / ExPEC).